The following is a 439-amino-acid chain: Methionine aminopeptidase 2-1 (439 aa).

A disordered region spans residues 1-87 (MSGGESRSPD…DKLFPSGNFP (87 aa)). Positions 22 to 32 (GGDDEESDGDG) are enriched in acidic residues. Positions 47–61 (KKRKKRNKKKSKKKS) are enriched in basic residues. A substrate-binding site is contributed by His-190. A divalent metal cation is bound by residues Asp-211, Asp-222, and His-291. His-299 contributes to the substrate binding site. 2 residues coordinate a divalent metal cation: Glu-324 and Glu-420.

It belongs to the peptidase M24A family. Methionine aminopeptidase eukaryotic type 2 subfamily. The cofactor is Co(2+). It depends on Zn(2+) as a cofactor. Mn(2+) serves as cofactor. Requires Fe(2+) as cofactor.

The protein resides in the cytoplasm. The catalysed reaction is Release of N-terminal amino acids, preferentially methionine, from peptides and arylamides.. In terms of biological role, cotranslationally removes the N-terminal methionine from nascent proteins. The N-terminal methionine is often cleaved when the second residue in the primary sequence is small and uncharged (Met-Ala-, Cys, Gly, Pro, Ser, Thr, or Val). This Chaetomium globosum (strain ATCC 6205 / CBS 148.51 / DSM 1962 / NBRC 6347 / NRRL 1970) (Soil fungus) protein is Methionine aminopeptidase 2-1.